Consider the following 344-residue polypeptide: Aurora kinase B (344 aa).

Residues 1–22 form a disordered region; it reads MAQKENSYPWPYGRQTAPSGLS. Phosphothreonine is present on T35. Position 62 is a phosphoserine (S62). A Phosphothreonine modification is found at T64. Residues 77-327 enclose the Protein kinase domain; the sequence is FEIGRPLGKG…LAQVSAHPWV (251 aa). ATP contacts are provided by residues 83 to 91 and K106; that span reads LGKGKFGNV. Catalysis depends on D200, which acts as the Proton acceptor. K215 carries the post-translational modification N6-acetyllysine. A Phosphoserine modification is found at S227. Position 232 is a phosphothreonine; by autocatalysis (T232).

Belongs to the protein kinase superfamily. Ser/Thr protein kinase family. Aurora subfamily. Component of the chromosomal passenger complex (CPC) composed of at least BIRC5/survivin, CDCA8/borealin, INCENP, AURKB or AURKC; predominantly independent AURKB- and AURKC-containing complexes exist. Associates with RACGAP1 during M phase. Interacts with SPDYC; this interaction may be required for proper localization of active, Thr-232-phosphorylated AURKB form during prometaphase and metaphase. Interacts with p53/TP53. Interacts (via the middle kinase domain) with NOC2L (via the N- and C-terminus domains). Interacts with CDCA1. Interacts with EVI5. Interacts with JTB. Interacts with NDC80. Interacts with PSMA3. Interacts with RNF2/RING1B. Interacts with SEPTIN1. Interacts with SIRT2. Interacts with TACC1. Interacts with TTC28. Post-translationally, the phosphorylation of Thr-232 requires the binding to INCENP and occurs by means of an autophosphorylation mechanism. Thr-232 phosphorylation is indispensable for the AURKB kinase activity. Acetylated at Lys-215 by KAT5 at kinetochores, increasing AURKB activity and promoting accurate chromosome segregation in mitosis. In terms of processing, ubiquitinated by different BCR (BTB-CUL3-RBX1) E3 ubiquitin ligase complexes. Ubiquitinated by the BCR(KLHL9-KLHL13) E3 ubiquitin ligase complex, ubiquitination leads to removal from mitotic chromosomes and is required for cytokinesis. During anaphase, the BCR(KLHL21) E3 ubiquitin ligase complex recruits the CPC complex from chromosomes to the spindle midzone and mediates the ubiquitination of AURKB. Ubiquitination of AURKB by BCR(KLHL21) E3 ubiquitin ligase complex may not lead to its degradation by the proteasome. Deubiquitinated by USP35; inhibiting CDH1-mediated degradation of AURKB. In terms of tissue distribution, high level expression seen in the thymus. It is also expressed in the spleen, lung, testis, colon, placenta and fetal liver. Expressed during S and G2/M phase and expression is up-regulated in cancer cells during M phase. Not expressed in normal liver, high expression in metastatic liver.

The protein resides in the nucleus. The protein localises to the chromosome. Its subcellular location is the centromere. It localises to the kinetochore. It is found in the cytoplasm. The protein resides in the cytoskeleton. The protein localises to the spindle. Its subcellular location is the midbody. The enzyme catalyses L-seryl-[protein] + ATP = O-phospho-L-seryl-[protein] + ADP + H(+). It carries out the reaction L-threonyl-[protein] + ATP = O-phospho-L-threonyl-[protein] + ADP + H(+). With respect to regulation, activity is greatly increased when AURKB is within the CPC complex. In particular, AURKB-phosphorylated INCENP acts as an activator of AURKB. Positive feedback between HASPIN and AURKB contributes to CPC localization. Inhibited by ZM447439. In terms of biological role, serine/threonine-protein kinase component of the chromosomal passenger complex (CPC), a complex that acts as a key regulator of mitosis. The CPC complex has essential functions at the centromere in ensuring correct chromosome alignment and segregation and is required for chromatin-induced microtubule stabilization and spindle assembly. Involved in the bipolar attachment of spindle microtubules to kinetochores and is a key regulator for the onset of cytokinesis during mitosis. Required for central/midzone spindle assembly and cleavage furrow formation. Key component of the cytokinesis checkpoint, a process required to delay abscission to prevent both premature resolution of intercellular chromosome bridges and accumulation of DNA damage: phosphorylates CHMP4C, leading to retain abscission-competent VPS4 (VPS4A and/or VPS4B) at the midbody ring until abscission checkpoint signaling is terminated at late cytokinesis. AURKB phosphorylates the CPC complex subunits BIRC5/survivin, CDCA8/borealin and INCENP. Phosphorylation of INCENP leads to increased AURKB activity. Other known AURKB substrates involved in centromeric functions and mitosis are CENPA, DES/desmin, GPAF, KIF2C, NSUN2, RACGAP1, SEPTIN1, VIM/vimentin, HASPIN, and histone H3. A positive feedback loop involving HASPIN and AURKB contributes to localization of CPC to centromeres. Phosphorylation of VIM controls vimentin filament segregation in cytokinetic process, whereas histone H3 is phosphorylated at 'Ser-10' and 'Ser-28' during mitosis (H3S10ph and H3S28ph, respectively). AURKB is also required for kinetochore localization of BUB1 and SGO1. Phosphorylation of p53/TP53 negatively regulates its transcriptional activity. Key regulator of active promoters in resting B- and T-lymphocytes: acts by mediating phosphorylation of H3S28ph at active promoters in resting B-cells, inhibiting RNF2/RING1B-mediated ubiquitination of histone H2A and enhancing binding and activity of the USP16 deubiquitinase at transcribed genes. Acts as an inhibitor of CGAS during mitosis: catalyzes phosphorylation of the N-terminus of CGAS during the G2-M transition, blocking CGAS liquid phase separation and activation, and thereby preventing CGAS-induced autoimmunity. Phosphorylates KRT5 during anaphase and telophase. Phosphorylates ATXN10 which promotes phosphorylation of ATXN10 by PLK1 and may play a role in the regulation of cytokinesis and stimulating the proteasomal degradation of ATXN10. The protein is Aurora kinase B (AURKB) of Homo sapiens (Human).